The sequence spans 158 residues: C-type lectin lectoxin-Enh4 (158 aa).

Residues 1-23 (MGQFTVVSLGLLAMFLSLSGAKG) form the signal peptide. 3 disulfide bridges follow: Cys-26–Cys-37, Cys-54–Cys-154, and Cys-129–Cys-146. In terms of domain architecture, C-type lectin spans 33–155 (RNGVCNKLFP…CASLHPFICQ (123 aa)). The short motif at 119 to 121 (EPN) is the Mannose-binding element. Ca(2+)-binding residues include Glu-127, Asn-142, and Asp-143.

Belongs to the true venom lectin family. In terms of tissue distribution, expressed by the venom gland.

Its subcellular location is the secreted. Functionally, mannose-binding lectin which recognizes specific carbohydrate structures and agglutinates a variety of animal cells by binding to cell-surface glycoproteins and glycolipids. May be a calcium-dependent lectin. The protein is C-type lectin lectoxin-Enh4 of Pseudoferania polylepis (Macleay's water snake).